The following is a 304-amino-acid chain: Aspartate carbamoyltransferase catalytic subunit (304 aa).

Residues Arg57 and Thr58 each contribute to the carbamoyl phosphate site. Lys85 serves as a coordination point for L-aspartate. Arg107, His134, and Gln137 together coordinate carbamoyl phosphate. 2 residues coordinate L-aspartate: Arg167 and Arg216. Residues Ala260 and Pro261 each contribute to the carbamoyl phosphate site.

Belongs to the aspartate/ornithine carbamoyltransferase superfamily. ATCase family. As to quaternary structure, heterododecamer (2C3:3R2) of six catalytic PyrB chains organized as two trimers (C3), and six regulatory PyrI chains organized as three dimers (R2).

It catalyses the reaction carbamoyl phosphate + L-aspartate = N-carbamoyl-L-aspartate + phosphate + H(+). It functions in the pathway pyrimidine metabolism; UMP biosynthesis via de novo pathway; (S)-dihydroorotate from bicarbonate: step 2/3. In terms of biological role, catalyzes the condensation of carbamoyl phosphate and aspartate to form carbamoyl aspartate and inorganic phosphate, the committed step in the de novo pyrimidine nucleotide biosynthesis pathway. The sequence is that of Aspartate carbamoyltransferase catalytic subunit from Fusobacterium nucleatum subsp. nucleatum (strain ATCC 25586 / DSM 15643 / BCRC 10681 / CIP 101130 / JCM 8532 / KCTC 2640 / LMG 13131 / VPI 4355).